We begin with the raw amino-acid sequence, 346 residues long: Protein FAF1 (346 aa).

2 disordered regions span residues 22–120 (QFGS…LRSG) and 323–346 (KRDIARISGGERSGKFNGKKKSRR). Residues 31–65 (FEDKTKNIRTEVDTRDSSGDEIDNSDHGSDFKDGT) show a composition bias toward basic and acidic residues. The span at 72-85 (SDEDSGNETAEENN) shows a compositional bias: acidic residues.

In terms of assembly, interacts with KRR1.

It localises to the nucleus. The protein resides in the nucleolus. Functionally, required for pre-rRNA processing and 40S ribosomal subunit assembly. Seems to act in the processing of 35S rRNA at the A(0), A(1), and A(2) cleavage sites. The chain is Protein FAF1 (FAF1) from Saccharomyces cerevisiae (strain ATCC 204508 / S288c) (Baker's yeast).